The sequence spans 1594 residues: Calpain-D (1594 aa).

2 RanBP2-type zinc fingers span residues Met-1–Val-35 and Leu-135–Leu-164. 5 disordered regions span residues Glu-210 to Asp-256, Glu-371 to Gln-400, Ala-420 to Gly-459, Lys-524 to Glu-543, and Ala-554 to Gly-606. The span at His-215–Gly-229 shows a compositional bias: basic residues. Polar residues-rich tracts occupy residues Arg-246–Ile-255 and Glu-371–Arg-385. At Ser-250 the chain carries Phosphoserine. The segment covering Asn-438–Gly-459 has biased composition (low complexity). Residues Gln-528–Ser-541 show a composition bias toward polar residues. A RanBP2-type 3 zinc finger spans residues Arg-643 to Gln-673. Residues Gln-684–Pro-703 form a disordered region. 2 RanBP2-type zinc fingers span residues Arg-704–Lys-733 and Arg-744–Pro-774. Disordered stretches follow at residues Arg-786–Gly-811 and Ser-860–Val-884. Positions Ser-860–Gly-871 are enriched in polar residues. The RanBP2-type 6 zinc-finger motif lies at Ser-927–Leu-956. A Calpain catalytic domain is found at Leu-1014–Arg-1321. Residues Cys-1079, His-1245, and Asn-1265 contribute to the active site.

Belongs to the peptidase C2 family.

In terms of biological role, has a role in eye development. Calcium-regulated non-lysosomal thiol-protease. The polypeptide is Calpain-D (sol) (Drosophila melanogaster (Fruit fly)).